The following is a 110-amino-acid chain: UPF0060 membrane protein MT2717 (110 aa).

The next 4 membrane-spanning stretches (helical) occupy residues 6–26 (ILLF…VWQG), 32–52 (GWLW…FATL), 61–81 (VLAA…MALD), and 90–110 (VIGA…PRGH).

This sequence belongs to the UPF0060 family.

The protein localises to the cell membrane. The protein is UPF0060 membrane protein MT2717 of Mycobacterium tuberculosis (strain CDC 1551 / Oshkosh).